The sequence spans 464 residues: 3-isopropylmalate dehydratase large subunit (464 aa).

C345, C405, and C408 together coordinate [4Fe-4S] cluster.

It belongs to the aconitase/IPM isomerase family. LeuC type 1 subfamily. As to quaternary structure, heterodimer of LeuC and LeuD. [4Fe-4S] cluster is required as a cofactor.

It catalyses the reaction (2R,3S)-3-isopropylmalate = (2S)-2-isopropylmalate. Its pathway is amino-acid biosynthesis; L-leucine biosynthesis; L-leucine from 3-methyl-2-oxobutanoate: step 2/4. Functionally, catalyzes the isomerization between 2-isopropylmalate and 3-isopropylmalate, via the formation of 2-isopropylmaleate. In Bacteroides fragilis (strain ATCC 25285 / DSM 2151 / CCUG 4856 / JCM 11019 / LMG 10263 / NCTC 9343 / Onslow / VPI 2553 / EN-2), this protein is 3-isopropylmalate dehydratase large subunit.